The sequence spans 142 residues: Succinate dehydrogenase subunit 6, mitochondrial (142 aa).

At Gly-2 the chain carries N-acetylglycine.

In terms of assembly, component of complex II composed of eight subunits in plants: four classical SDH subunits SDH1, SDH2, SDH3 and SDH4 (a flavoprotein (FP), an iron-sulfur protein (IP), and a cytochrome b composed of a large and a small subunit.), as well as four subunits unknown in mitochondria from bacteria and heterotrophic eukaryotes.

The protein localises to the mitochondrion inner membrane. The protein operates within carbohydrate metabolism; tricarboxylic acid cycle. This chain is Succinate dehydrogenase subunit 6, mitochondrial, found in Arabidopsis thaliana (Mouse-ear cress).